The primary structure comprises 255 residues: uncharacterized protein (255 aa).

This is an uncharacterized protein from Pseudomonas chlororaphis (Pseudomonas aureofaciens).